A 341-amino-acid chain; its full sequence is MLRRSASREGAHVLIDTYGRVATDLRVSLTDRCNLRCTYCMPEEGLQWLAKPDLLTDDEIVRLIDIAVTSLGIEEVRFTGGEPLLRPGLVGIVERVAALEPRPQMSLTTNGIGLRRTATALKAAGLDRVNVSLDTLRPDVFKTLTRRDRHKDVLEGLAAAREAGLTPVKVNSVLMPGLNDDEAPDLLAWAVEHDYELRFIEQMPLDAQHGWKREGMVTAGDILTSLRTRFELTAEGSEERGSAPAERWLVDGGPHRVGVIASVTRPFCSACDRTRLTADGQVRTCLFATEETDLRAALRSDAPDEEIARIWRLAMWGKKAGAGLDDPTFVQPDRPMSAIGG.

The Radical SAM core domain occupies 17–235; that stretch reads TYGRVATDLR…LRTRFELTAE (219 aa). Position 26 (Arg-26) interacts with GTP. [4Fe-4S] cluster is bound by residues Cys-33 and Cys-37. Tyr-39 lines the S-adenosyl-L-methionine pocket. Cys-40 lines the [4Fe-4S] cluster pocket. Arg-77 lines the GTP pocket. Gly-81 contributes to the S-adenosyl-L-methionine binding site. Residue Thr-108 participates in GTP binding. Ser-132 lines the S-adenosyl-L-methionine pocket. Lys-169 serves as a coordination point for GTP. Met-203 serves as a coordination point for S-adenosyl-L-methionine. [4Fe-4S] cluster-binding residues include Cys-268 and Cys-271. 273–275 serves as a coordination point for GTP; it reads RTR. Residue Cys-285 coordinates [4Fe-4S] cluster.

It belongs to the radical SAM superfamily. MoaA family. As to quaternary structure, monomer and homodimer. [4Fe-4S] cluster serves as cofactor.

The enzyme catalyses GTP + AH2 + S-adenosyl-L-methionine = (8S)-3',8-cyclo-7,8-dihydroguanosine 5'-triphosphate + 5'-deoxyadenosine + L-methionine + A + H(+). The protein operates within cofactor biosynthesis; molybdopterin biosynthesis. Its function is as follows. Catalyzes the cyclization of GTP to (8S)-3',8-cyclo-7,8-dihydroguanosine 5'-triphosphate. This is GTP 3',8-cyclase from Streptomyces coelicolor (strain ATCC BAA-471 / A3(2) / M145).